Reading from the N-terminus, the 261-residue chain is Calbindin (261 aa).

A2 is modified (N-acetylalanine). The tract at residues 2 to 7 is interaction with RANBP9; the sequence is AESHLQ. 5 consecutive EF-hand domains span residues 11-46, 53-88, 98-133, 142-177, and 186-221; these read ITAS…LLQA, ELSP…EENF, KSCE…LLEK, KLAE…QENF, and MCGK…LCEK. 5 residues coordinate Ca(2+): D24, D26, S28, Y30, and E35. Residues D111, D113, S115, E122, D155, N157, D159, K161, E166, D199, D201, N203, Y205, and E210 each coordinate Ca(2+).

Belongs to the calbindin family. Interacts with RANBP9.

Its function is as follows. Buffers cytosolic calcium. May stimulate a membrane Ca(2+)-ATPase and a 3',5'-cyclic nucleotide phosphodiesterase. This Rattus norvegicus (Rat) protein is Calbindin (Calb1).